A 266-amino-acid chain; its full sequence is Interleukin-1 beta (266 aa).

Residues Met-1 to Asp-114 constitute a propeptide that is removed on maturation.

It belongs to the IL-1 family. As to quaternary structure, monomer. In its precursor form, weakly interacts with full-length MEFV; the mature cytokine does not interact at all. Interacts with integrins ITGAV:ITGBV and ITGA5:ITGB1; integrin-binding is required for IL1B signaling. Interacts with cargo receptor TMED10; the interaction is direct and is required for the secretion of IL1B mature form. Interacts with HSP90AB1; the interaction facilitates cargo translocation into the ERGIC. Interacts with HSP90B1; the interaction facilitates cargo translocation into the ERGIC.

The protein localises to the cytoplasm. Its subcellular location is the cytosol. It is found in the secreted. It localises to the lysosome. The protein resides in the extracellular exosome. Functionally, potent pro-inflammatory cytokine. Initially discovered as the major endogenous pyrogen, induces prostaglandin synthesis, neutrophil influx and activation, T-cell activation and cytokine production, B-cell activation and antibody production, and fibroblast proliferation and collagen production. Promotes Th17 differentiation of T-cells. Synergizes with IL12/interleukin-12 to induce IFNG synthesis from T-helper 1 (Th1) cells. Plays a role in angiogenesis by inducing VEGF production synergistically with TNF and IL6. Involved in transduction of inflammation downstream of pyroptosis: its mature form is specifically released in the extracellular milieu by passing through the gasdermin-D (GSDMD) pore. The sequence is that of Interleukin-1 beta (IL1B) from Canis lupus familiaris (Dog).